Here is a 135-residue protein sequence, read N- to C-terminus: MLSPKKTKFRKEHRGRMKGRSSRGSRISFGKYALQALEPAWLTSRQIEAGRRAMTRNVRRGGKIWVRIFPDKPVTVKPTQTRMGSGKGSPEYWVAVVKPGRILYEMGGVAENIARKAIEIAASKMPIRTQFIISK.

Residues 1-23 (MLSPKKTKFRKEHRGRMKGRSSR) are compositionally biased toward basic residues. The disordered stretch occupies residues 1–24 (MLSPKKTKFRKEHRGRMKGRSSRG).

This sequence belongs to the universal ribosomal protein uL16 family. In terms of assembly, part of the 50S ribosomal subunit.

It localises to the plastid. It is found in the chloroplast. This is Large ribosomal subunit protein uL16c from Pelargonium hortorum (Common geranium).